The sequence spans 241 residues: 3-deoxy-manno-octulosonate cytidylyltransferase (241 aa).

The protein belongs to the KdsB family.

It localises to the cytoplasm. It carries out the reaction 3-deoxy-alpha-D-manno-oct-2-ulosonate + CTP = CMP-3-deoxy-beta-D-manno-octulosonate + diphosphate. It functions in the pathway nucleotide-sugar biosynthesis; CMP-3-deoxy-D-manno-octulosonate biosynthesis; CMP-3-deoxy-D-manno-octulosonate from 3-deoxy-D-manno-octulosonate and CTP: step 1/1. Its pathway is bacterial outer membrane biogenesis; lipopolysaccharide biosynthesis. Activates KDO (a required 8-carbon sugar) for incorporation into bacterial lipopolysaccharide in Gram-negative bacteria. This chain is 3-deoxy-manno-octulosonate cytidylyltransferase, found in Rickettsia typhi (strain ATCC VR-144 / Wilmington).